A 426-amino-acid chain; its full sequence is DNA polymerase processivity factor component OPG148 (426 aa).

The protein belongs to the orthopoxvirus OPG148 family. In terms of assembly, interacts with the DNA polymerase catalytic subunit OPG071. Interacts with UDG/OPG116. Component of the uracil-DNA glycosylase(UDG)-OPG148-polymerase complex; OPG148 and UDG form a heterodimeric processivity factor that associates with OPG071 to form the processive polymerase holoenzyme. Interacts with OPG117.

In terms of biological role, plays an essential role in viral DNA replication by acting as the polymerase processivity factor together with protein OPG116. Serves as a bridge which links the DNA polymerase OPG071 and the uracil DNA glycosylase. In Cynomys gunnisoni (Gunnison's prairie dog), this protein is DNA polymerase processivity factor component OPG148 (OPG148).